The following is a 240-amino-acid chain: Nuclear receptor-interacting protein 3 (240 aa).

This chain is Nuclear receptor-interacting protein 3 (Nrip3), found in Mus musculus (Mouse).